The chain runs to 525 residues: GMP synthase [glutamine-hydrolyzing] (525 aa).

Positions 8-207 constitute a Glutamine amidotransferase type-1 domain; sequence KILILDFGSQ…ALDICGCAAN (200 aa). Cysteine 85 acts as the Nucleophile in catalysis. Catalysis depends on residues histidine 181 and glutamate 183. A GMPS ATP-PPase domain is found at 208-400; sequence WKPSSIIEDA…LGLPYNMLYR (193 aa). 235 to 241 contributes to the ATP binding site; the sequence is SGGVDSS.

Homodimer.

It carries out the reaction XMP + L-glutamine + ATP + H2O = GMP + L-glutamate + AMP + diphosphate + 2 H(+). Its pathway is purine metabolism; GMP biosynthesis; GMP from XMP (L-Gln route): step 1/1. Catalyzes the synthesis of GMP from XMP. The sequence is that of GMP synthase [glutamine-hydrolyzing] from Shewanella baltica (strain OS223).